A 20-amino-acid polypeptide reads, in one-letter code: Large ribosomal subunit protein uL5 (20 aa).

Belongs to the universal ribosomal protein uL5 family. In terms of assembly, part of the 50S ribosomal subunit; part of the 5S rRNA/L5/L18/L25 subcomplex. Contacts the 5S rRNA and the P site tRNA. Forms a bridge to the 30S subunit in the 70S ribosome.

This is one of the proteins that bind and probably mediate the attachment of the 5S RNA into the large ribosomal subunit, where it forms part of the central protuberance. In the 70S ribosome it contacts protein S13 of the 30S subunit (bridge B1b), connecting the two subunits; this bridge is implicated in subunit movement. Contacts the P site tRNA; the 5S rRNA and some of its associated proteins might help stabilize positioning of ribosome-bound tRNAs. The chain is Large ribosomal subunit protein uL5 (rplE) from Bacillus cereus.